The chain runs to 192 residues: 3-isopropylmalate dehydratase small subunit (192 aa).

Belongs to the LeuD family. LeuD type 1 subfamily. Heterodimer of LeuC and LeuD.

It carries out the reaction (2R,3S)-3-isopropylmalate = (2S)-2-isopropylmalate. Its pathway is amino-acid biosynthesis; L-leucine biosynthesis; L-leucine from 3-methyl-2-oxobutanoate: step 2/4. Functionally, catalyzes the isomerization between 2-isopropylmalate and 3-isopropylmalate, via the formation of 2-isopropylmaleate. This chain is 3-isopropylmalate dehydratase small subunit, found in Zymomonas mobilis subsp. mobilis (strain ATCC 31821 / ZM4 / CP4).